The sequence spans 120 residues: Large ribosomal subunit protein bL20 (120 aa).

Belongs to the bacterial ribosomal protein bL20 family.

Its function is as follows. Binds directly to 23S ribosomal RNA and is necessary for the in vitro assembly process of the 50S ribosomal subunit. It is not involved in the protein synthesizing functions of that subunit. In Pseudoalteromonas translucida (strain TAC 125), this protein is Large ribosomal subunit protein bL20.